We begin with the raw amino-acid sequence, 205 residues long: NADH-quinone oxidoreductase subunit J (205 aa).

The next 5 membrane-spanning stretches (helical) occupy residues 1-21 (MPIF…CVVL), 26-46 (VYSV…MILL), 54-74 (LLIV…IMML), 89-109 (LSLS…TIIL), and 142-162 (FMLP…SCIT).

The protein belongs to the complex I subunit 6 family.

It is found in the cell membrane. The catalysed reaction is a quinone + NADH + 5 H(+)(in) = a quinol + NAD(+) + 4 H(+)(out). In terms of biological role, NDH-1 shuttles electrons from NADH, via FMN and iron-sulfur (Fe-S) centers, to quinones in the respiratory chain. Couples the redox reaction to proton translocation (for every two electrons transferred, four hydrogen ions are translocated across the cytoplasmic membrane), and thus conserves the redox energy in a proton gradient. This Rickettsia prowazekii (strain Madrid E) protein is NADH-quinone oxidoreductase subunit J (nuoJ).